Here is a 376-residue protein sequence, read N- to C-terminus: Queuine tRNA-ribosyltransferase (376 aa).

The active-site Proton acceptor is D89. Substrate is bound by residues 89 to 93 (DSGGF), D143, Q194, and G221. The segment at 252–258 (GVGTPSN) is RNA binding. D271 serves as the catalytic Nucleophile. Positions 276 to 280 (ARNGR) are RNA binding; important for wobble base 34 recognition. Zn(2+) is bound by residues C309, C311, C314, and H340.

Belongs to the queuine tRNA-ribosyltransferase family. As to quaternary structure, homodimer. Within each dimer, one monomer is responsible for RNA recognition and catalysis, while the other monomer binds to the replacement base PreQ1. Zn(2+) is required as a cofactor.

It carries out the reaction 7-aminomethyl-7-carbaguanine + guanosine(34) in tRNA = 7-aminomethyl-7-carbaguanosine(34) in tRNA + guanine. It participates in tRNA modification; tRNA-queuosine biosynthesis. Functionally, catalyzes the base-exchange of a guanine (G) residue with the queuine precursor 7-aminomethyl-7-deazaguanine (PreQ1) at position 34 (anticodon wobble position) in tRNAs with GU(N) anticodons (tRNA-Asp, -Asn, -His and -Tyr). Catalysis occurs through a double-displacement mechanism. The nucleophile active site attacks the C1' of nucleotide 34 to detach the guanine base from the RNA, forming a covalent enzyme-RNA intermediate. The proton acceptor active site deprotonates the incoming PreQ1, allowing a nucleophilic attack on the C1' of the ribose to form the product. After dissociation, two additional enzymatic reactions on the tRNA convert PreQ1 to queuine (Q), resulting in the hypermodified nucleoside queuosine (7-(((4,5-cis-dihydroxy-2-cyclopenten-1-yl)amino)methyl)-7-deazaguanosine). In Clostridium acetobutylicum (strain ATCC 824 / DSM 792 / JCM 1419 / IAM 19013 / LMG 5710 / NBRC 13948 / NRRL B-527 / VKM B-1787 / 2291 / W), this protein is Queuine tRNA-ribosyltransferase.